A 248-amino-acid polypeptide reads, in one-letter code: Protein maestro (248 aa).

A disordered region spans residues 1–20 (MDQRQRRILGQPLSIPTSQP). HEAT repeat units follow at residues 44–79 (EPLK…AREA) and 128–163 (SFFI…AAFA).

The protein resides in the nucleus. It is found in the nucleolus. The polypeptide is Protein maestro (MRO) (Macaca fascicularis (Crab-eating macaque)).